Consider the following 179-residue polypeptide: Large ribosomal subunit protein uL5 (179 aa).

It belongs to the universal ribosomal protein uL5 family. As to quaternary structure, part of the 50S ribosomal subunit; part of the 5S rRNA/L5/L18/L25 subcomplex. Contacts the 5S rRNA and the P site tRNA. Forms a bridge to the 30S subunit in the 70S ribosome.

Functionally, this is one of the proteins that bind and probably mediate the attachment of the 5S RNA into the large ribosomal subunit, where it forms part of the central protuberance. In the 70S ribosome it contacts protein S13 of the 30S subunit (bridge B1b), connecting the 2 subunits; this bridge is implicated in subunit movement. Contacts the P site tRNA; the 5S rRNA and some of its associated proteins might help stabilize positioning of ribosome-bound tRNAs. The sequence is that of Large ribosomal subunit protein uL5 from Burkholderia mallei (strain NCTC 10247).